Reading from the N-terminus, the 400-residue chain is Argininosuccinate synthase (400 aa).

Residues 10 to 18 and A38 contribute to the ATP site; that span reads AYSGGVDTS. L-citrulline is bound at residue Y89. G119 is an ATP binding site. L-aspartate is bound by residues T121, N125, and D126. N125 is an L-citrulline binding site. Positions 129, 177, 186, 262, and 274 each coordinate L-citrulline.

It belongs to the argininosuccinate synthase family. Type 1 subfamily. In terms of assembly, homotetramer.

The protein resides in the cytoplasm. It carries out the reaction L-citrulline + L-aspartate + ATP = 2-(N(omega)-L-arginino)succinate + AMP + diphosphate + H(+). It participates in amino-acid biosynthesis; L-arginine biosynthesis; L-arginine from L-ornithine and carbamoyl phosphate: step 2/3. This Trichormus variabilis (strain ATCC 29413 / PCC 7937) (Anabaena variabilis) protein is Argininosuccinate synthase.